We begin with the raw amino-acid sequence, 457 residues long: Interferon regulatory factor 7 (457 aa).

Positions 9-126 (RVLFGDWLLG…DPHKVYELSR (118 aa)) form a DNA-binding region, IRF tryptophan pentad repeat. The residue at position 92 (K92) is an N6-acetyllysine; by KAT2A and KAT2B. A necessary for the interaction with NMI region spans residues 238–410 (RSLGFLDVTI…TLILVKLEPW (173 aa)). K329 is covalently cross-linked (Glycyl lysine isopeptide (Lys-Gly) (interchain with G-Cter in ubiquitin)). Glycyl lysine isopeptide (Lys-Gly) (interchain with G-Cter in SUMO) cross-links involve residues K398 and K400. A phosphoserine mark is found at S425, S426, and S429. Position 431 is a phosphoserine; by TBK1 and IKKE (S431). Phosphoserine occurs at positions 437, 438, and 441.

The protein belongs to the IRF family. As to quaternary structure, monomer. Homodimer; phosphorylation-induced. Heterodimer with IRF3. Interacts with TICAM1 and TICAM2. Interacts with MYD88 and TRAF6. Interacts with NMI; the interaction is direct and leads to the inhibition of IRF7-mediated type I IFN production. Interacts with GBP4; preventing interaction between TRAF6 and IRF7, resulting in impaired TRAF6-mediated IRF7 ubiquitination. Interacts with TARBP2; this interaction prevents IRF7 phosphorylation and activation. Acetylation inhibits its DNA-binding ability and activity. Post-translationally, in response to a viral infection, phosphorylated by TBK1 and IKBKE1. Phosphorylation, and subsequent activation is inhibited by vaccinia virus protein E3. In TLR7- and TLR9-mediated signaling pathway, phosphorylated by IRAK1. In terms of processing, TRAF6-mediated ubiquitination is required for IRF7 activation. TRIM35 mediates IRF7 'Lys-48'-linked polyubiquitination and subsequent proteasomal degradation. 'Lys-48'-linked polyubiquitination and subsequent proteasomal degradation is NMI-dependent in response to Sendai virus infection. Ubiquitinated by UBE3C, leading to its degradation. Sumoylated by TRIM28, which inhibits its transactivation activity. Post-translationally, 'Lys-63'-linked ubiquitination by NEURL3 promotes IRF7 activation.

It localises to the nucleus. The protein localises to the cytoplasm. In the absence of viral infection, maintained as a monomer in an autoinhibited state and phosphorylation disrupts this autoinhibition leading to the liberation of the DNA-binding and dimerization activities and its nuclear localization where it can activate type I IFN and ISG genes. Key transcriptional regulator of type I interferon (IFN)-dependent immune responses and plays a critical role in the innate immune response against DNA and RNA viruses. Regulates the transcription of type I IFN genes (IFN-alpha and IFN-beta) and IFN-stimulated genes (ISG) by binding to an interferon-stimulated response element (ISRE) in their promoters. Can efficiently activate both the IFN-beta (IFNB) and the IFN-alpha (IFNA) genes and mediate their induction via both the virus-activated, MyD88-independent pathway and the TLR-activated, MyD88-dependent pathway. Induces transcription of ubiquitin hydrolase USP25 mRNA in response to lipopolysaccharide (LPS) or viral infection in a type I IFN-dependent manner. Required during both the early and late phases of the IFN gene induction but is more critical for the late than for the early phase. Exists in an inactive form in the cytoplasm of uninfected cells and following viral infection, double-stranded RNA (dsRNA), or toll-like receptor (TLR) signaling, becomes phosphorylated by IKBKE and TBK1 kinases. This induces a conformational change, leading to its dimerization and nuclear localization where along with other coactivators it can activate transcription of the type I IFN and ISG genes. Can also play a role in regulating adaptive immune responses by inducing PSMB9/LMP2 expression, either directly or through induction of IRF1. Binds to the Q promoter (Qp) of EBV nuclear antigen 1 a (EBNA1) and may play a role in the regulation of EBV latency. Can activate distinct gene expression programs in macrophages and regulate the anti-tumor properties of primary macrophages. This Mus musculus (Mouse) protein is Interferon regulatory factor 7 (Irf7).